An 80-amino-acid chain; its full sequence is Cell division protein ZapB (80 aa).

A coiled-coil region spans residues 3-80 (FEVFEKLEAK…ALLGKMNEVN (78 aa)).

It belongs to the ZapB family. In terms of assembly, homodimer. The ends of the coiled-coil dimer bind to each other, forming polymers. Interacts with FtsZ.

The protein localises to the cytoplasm. Its function is as follows. Non-essential, abundant cell division factor that is required for proper Z-ring formation. It is recruited early to the divisome by direct interaction with FtsZ, stimulating Z-ring assembly and thereby promoting cell division earlier in the cell cycle. Its recruitment to the Z-ring requires functional FtsA or ZipA. This Edwardsiella ictaluri (strain 93-146) protein is Cell division protein ZapB.